Here is a 215-residue protein sequence, read N- to C-terminus: Thymidylate kinase (215 aa).

12 to 19 (GIDGAGKS) is an ATP binding site.

This sequence belongs to the thymidylate kinase family.

It catalyses the reaction dTMP + ATP = dTDP + ADP. In terms of biological role, phosphorylation of dTMP to form dTDP in both de novo and salvage pathways of dTTP synthesis. The sequence is that of Thymidylate kinase from Albidiferax ferrireducens (strain ATCC BAA-621 / DSM 15236 / T118) (Rhodoferax ferrireducens).